Here is a 945-residue protein sequence, read N- to C-terminus: MKTVALKEASSILPKYWPLTMFVHHNPLHELESLHFKQALKIAKDLFDAKVYMDPSYYVDLYRKGKVRKDSLEKNIEEFLRENNFNFNKYKVRKFLTDISPSWKEYKEESFNNPSIKVPDYLLEYIKKDKGYDNLDNLFYTYIKKYLFSEILDILFDQNIYNVFFNDAVEFISRFLDEGQTSITLPFREQGYWNCFRQFYKLDKHPEDIIEEFENTFQPPSLQDYARQLYIRFFGWSSFIKFRESTPFYPYQEEFPINLEDFGSSLLYLENQYIQELNKSKIKNYFDLMAFYKENKYYVILKLFEHRKILTPKYISKLYTSKDYDNIFNKFINEEIESEAKAIVNLSTKVFDKSDYLQTYNLVKTLKEDEECYLWIKSLEDSYALNFGREFIKEYQIDEKPKAFAVFCVDVRSEALRRNLERVDNYKTFGVAGFFGVKMALIEFDKAHELLLCPAMEIPDKVVLEVPTQKTQDYEKRKKLLISLKKILEGLKNNPYTPFFAVESFGWLFGYKLFGKTLFPSVVAKIDKKIKPKPPKTFYMIDKLSEKEVDTYTDKFFYEKIYQAFEKEGIKIKDCEVKDILSKLKNNENISQNYQKVLNRYRITKQYYDYIYNRFSNIGYTLDEQVILAENFLRLIGMVEDFPEFVLLVGHGSVSDNNPYESALDCGACGGNSGYHNVRAMCMILNKKEVREKLSIRIPDGTIFIPGLHNTTTDEIEFYDEDLVPENSLDKWEEIKKDFKKAGEKTRIERLSSLPYADNPEDVIVRSIDWSEMRPEWGLSKNLGVFVGKSESRINSVLKNRFFLHSYDYKIDVDNSILKRILNGPLLIAQWINAEHYFSTVDNEKFGSGSKVYHNVVSRIGVFSGNYSDLKIGLPYQTVYVEDRPFHEPIRLIAFVEAPLEKVVEAASQTDHPMMLVKNEWIRLVVIDKEKNKVFLFSNGNFVEL.

The Zn(2+) site is built by cysteine 408, aspartate 410, histidine 651, and cysteine 666.

It belongs to the inorganic carbon transporter (TC 9.A.2) DabA family. In terms of assembly, forms a complex with DabB. The cofactor is Zn(2+).

It localises to the cell inner membrane. Functionally, part of an energy-coupled inorganic carbon pump. This chain is Probable inorganic carbon transporter subunit DabA, found in Sulfurihydrogenibium azorense (strain DSM 15241 / OCM 825 / Az-Fu1).